The sequence spans 311 residues: MSNYLDFEKSIKQIDEDIANAKIRGDEHAVEILNKNLSKEISKVYKNLNEYQRLQLARHPDRPYAIDYINSFLVDGYEVHGDRAFRDDPAIVCYIGYIGGKKTVVIGEQKGRGTKNKLKRNFGMPHPEGYRKALRVAKLAEKFNLPILFLIDTPGAYPGVGAEERGQSEAIARNLFEFANLKTPIIAVVIGEGGSGGALAIGVADRLAMMKNSVFSVISPEGCAAILWNDPTKQEQATKSMKITADDLKNLSLIDDVINEPINGAHRDKDGAAKALANYFISELAELEKLDINELVAKRIDKVLSIGAYEE.

A CoA carboxyltransferase C-terminal domain is found at 36–286; the sequence is NLSKEISKVY…ANYFISELAE (251 aa).

The protein belongs to the AccA family. As to quaternary structure, acetyl-CoA carboxylase is a heterohexamer composed of biotin carboxyl carrier protein (AccB), biotin carboxylase (AccC) and two subunits each of ACCase subunit alpha (AccA) and ACCase subunit beta (AccD).

Its subcellular location is the cytoplasm. It carries out the reaction N(6)-carboxybiotinyl-L-lysyl-[protein] + acetyl-CoA = N(6)-biotinyl-L-lysyl-[protein] + malonyl-CoA. Its pathway is lipid metabolism; malonyl-CoA biosynthesis; malonyl-CoA from acetyl-CoA: step 1/1. Functionally, component of the acetyl coenzyme A carboxylase (ACC) complex. First, biotin carboxylase catalyzes the carboxylation of biotin on its carrier protein (BCCP) and then the CO(2) group is transferred by the carboxyltransferase to acetyl-CoA to form malonyl-CoA. The polypeptide is Acetyl-coenzyme A carboxylase carboxyl transferase subunit alpha (Campylobacter concisus (strain 13826)).